Consider the following 473-residue polypeptide: MKTLYSLRRFYPVETLFNGTLSLAGRDQETTGFAWWAGNARLINLSGKLLGAHVAHAGLIVFWAGAMNLFEVAHFVPEKPMYEQGLILLPHLATLGWGVGPGGEVVDTFPYFVSGVLHLISSAVLGFGGIYHALLGPETLEESFPFFGYVWKDRNKMTTILGIHLILLGIGAFLLVLKALYFGGVYDTWAPGGGDVRKITNLTLSPSVIFGYLLKSPFGGEGWIVSVDDLEDIIGGHVWLGSICILGGIWHILTKPFAWARRAFVWSGEAYLSYSLGALSVFGFIACCFVWFNNTAYPSEFYGPTGPEASQAQAFTFLVRDQRLGANVGSAQGPTGLGKYLMRSPTGEVIFGGETMRFWDLRAPWLEPLRGPNGLDLSRLKKDIQPWQERRSAEYMTHAPLGSLNSVGGVATEINAVNYVSPRSWLATSHFVLGFFLFVGHLWHAGRARAAAAGFEKGIDRDFEPVLSMTPLN.

Residues 1–14 (MKTLYSLRRFYPVE) constitute a propeptide that is removed on maturation. Residue Thr-15 is modified to N-acetylthreonine. Thr-15 carries the phosphothreonine modification. The next 5 membrane-spanning stretches (helical) occupy residues 69-93 (LFEV…PHLA), 134-155 (LLGP…KDRN), 178-200 (KALY…RKIT), 255-275 (KPFA…LSYS), and 291-312 (WFNN…ASQA). Glu-367 lines the [CaMn4O5] cluster pocket. Residues 447–471 (RARAAAAGFEKGIDRDFEPVLSMTP) traverse the membrane as a helical segment.

Belongs to the PsbB/PsbC family. PsbC subfamily. As to quaternary structure, PSII is composed of 1 copy each of membrane proteins PsbA, PsbB, PsbC, PsbD, PsbE, PsbF, PsbH, PsbI, PsbJ, PsbK, PsbL, PsbM, PsbT, PsbX, PsbY, PsbZ, Psb30/Ycf12, at least 3 peripheral proteins of the oxygen-evolving complex and a large number of cofactors. It forms dimeric complexes. Requires Binds multiple chlorophylls and provides some of the ligands for the Ca-4Mn-5O cluster of the oxygen-evolving complex. It may also provide a ligand for a Cl- that is required for oxygen evolution. PSII binds additional chlorophylls, carotenoids and specific lipids. as cofactor.

Its subcellular location is the plastid. It localises to the chloroplast thylakoid membrane. In terms of biological role, one of the components of the core complex of photosystem II (PSII). It binds chlorophyll and helps catalyze the primary light-induced photochemical processes of PSII. PSII is a light-driven water:plastoquinone oxidoreductase, using light energy to abstract electrons from H(2)O, generating O(2) and a proton gradient subsequently used for ATP formation. This chain is Photosystem II CP43 reaction center protein, found in Liriodendron tulipifera (Tuliptree).